Consider the following 304-residue polypeptide: Porphobilinogen deaminase (304 aa).

Cys240 carries the S-(dipyrrolylmethanemethyl)cysteine modification.

Belongs to the HMBS family. As to quaternary structure, monomer. The cofactor is dipyrromethane.

The enzyme catalyses 4 porphobilinogen + H2O = hydroxymethylbilane + 4 NH4(+). The protein operates within porphyrin-containing compound metabolism; protoporphyrin-IX biosynthesis; coproporphyrinogen-III from 5-aminolevulinate: step 2/4. Its function is as follows. Tetrapolymerization of the monopyrrole PBG into the hydroxymethylbilane pre-uroporphyrinogen in several discrete steps. The chain is Porphobilinogen deaminase from Xanthomonas oryzae pv. oryzae (strain KACC10331 / KXO85).